The sequence spans 127 residues: Cold-regulated protein 1 (127 aa).

The interval 39–127 is disordered; the sequence is ARGPPPSPAP…WTRPRMARAR (89 aa). The segment covering 85-101 has biased composition (basic residues); the sequence is SRRRRRRRATRRARSRM. The span at 102 to 121 shows a compositional bias: low complexity; the sequence is PRTTPWRAPRAPARAWWTRP.

This chain is Cold-regulated protein 1, found in Hordeum vulgare (Barley).